The sequence spans 301 residues: MGSIIDNLETEKRNINSENIDIMSTCEIIKTINSEDKKIAYAIEKVIPEIEKLIDATYEKMLFGGRVIYIGAGTSGRLGVLDASECPPTYGVDASLVQGIIAGGYGALLKAKEGAEDSLTLAKEDLKEIKLNSHDTVIGLAASGRTPYVIGGLDYANEIGALTGAISCVNNAQISQHAKYFIEAIVGAEVITGSTRMKAGTAQKMILNMISTSLMIKKGKVYHNLMVDVQPTNKKLIERSKNIIAECTNSSVEEAEKALIDSGNQVKVAMLMLLTKKDKKSCINILNENDGNISKSIRNIP.

In terms of domain architecture, SIS spans 57-220 (TYEKMLFGGR…STSLMIKKGK (164 aa)). E85 acts as the Proton donor in catalysis. E116 is an active-site residue.

It belongs to the GCKR-like family. MurNAc-6-P etherase subfamily. Homodimer.

It catalyses the reaction N-acetyl-D-muramate 6-phosphate + H2O = N-acetyl-D-glucosamine 6-phosphate + (R)-lactate. It participates in amino-sugar metabolism; N-acetylmuramate degradation. Functionally, specifically catalyzes the cleavage of the D-lactyl ether substituent of MurNAc 6-phosphate, producing GlcNAc 6-phosphate and D-lactate. This chain is N-acetylmuramic acid 6-phosphate etherase, found in Clostridium botulinum (strain Eklund 17B / Type B).